The following is a 277-amino-acid chain: Zaragozic acid A biosynthesis cluster protein 1 (277 aa).

It participates in secondary metabolite biosynthesis. In terms of biological role, part of the gene cluster that mediates the biosynthesis of squalestatin S1 (SQS1, also known as zaragozic acid A), a heavily oxidized fungal polyketide that offers potent cholesterol lowering activity by targeting squalene synthase (SS). SQS1 is composed of a 2,8-dioxobicyclic[3.2.1]octane-3,4,5-tricarboxyclic acid core that is connected to two lipophilic polyketide arms. These initial steps feature the priming of an unusual benzoic acid starter unit onto the highly reducing polyketide synthase clz14, followed by oxaloacetate extension and product release to generate a tricarboxylic acid containing product. The phenylalanine ammonia lyase (PAL) clz10 and the acyl-CoA ligase clz12 are involved in transforming phenylalanine into benzoyl-CoA. The citrate synthase-like protein clz17 is involved in connecting the C-alpha-carbons of the hexaketide chain and oxaloacetate to afford the tricarboxylic acid unit. The potential hydrolytic enzymes, clz11 and clz13, are in close proximity to pks2 and may participate in product release. On the other side, the tetraketide arm is synthesized by a the squalestatin tetraketide synthase clz2 and enzymatically esterified to the core in the last biosynthetic step, by the acetyltransferase clz6. The biosynthesis of the tetraketide must involve 3 rounds of chain extension. After the first and second rounds methyl-transfer occurs, and in all rounds of extension the ketoreductase and dehydratase are active. The enoyl reductase and C-MeT of clz2 are not active in the final round of extension. The acetyltransferase clz6 appears to have a broad substrate selectivity for its acyl CoA substrate, allowing the in vitro synthesis of novel squalestatins. The biosynthesis of SQS1 requires several oxidative steps likely performed by oxidoreductases clz3, clz15 and clz16. Finally, in support of the identification of the cluster as being responsible for SQS1 production, the cluster contains a gene encoding a putative squalene synthase (SS) clz20, suggesting a likely mechanism for self-resistance. The sequence is that of Zaragozic acid A biosynthesis cluster protein 1 from Cochliobolus lunatus (Filamentous fungus).